Reading from the N-terminus, the 251-residue chain is Flap endonuclease Xni (251 aa).

Asp104 lines the Mg(2+) pocket. Residues 160-249 (VLPQQLPDYW…IDGNLQQLRL (90 aa)) form the 5'-3' exonuclease domain. Residues Leu171, Ala172, Pro180, Val182, and Ile185 each contribute to the K(+) site. Residues 184-189 (GIGPKS) are interaction with DNA.

Belongs to the Xni family. Requires Mg(2+) as cofactor. The cofactor is K(+).

In terms of biological role, has flap endonuclease activity. During DNA replication, flap endonucleases cleave the 5'-overhanging flap structure that is generated by displacement synthesis when DNA polymerase encounters the 5'-end of a downstream Okazaki fragment. The protein is Flap endonuclease Xni of Citrobacter koseri (strain ATCC BAA-895 / CDC 4225-83 / SGSC4696).